We begin with the raw amino-acid sequence, 267 residues long: Pyrroline-5-carboxylate reductase (267 aa).

It belongs to the pyrroline-5-carboxylate reductase family.

Its subcellular location is the cytoplasm. The catalysed reaction is L-proline + NADP(+) = (S)-1-pyrroline-5-carboxylate + NADPH + 2 H(+). It catalyses the reaction L-proline + NAD(+) = (S)-1-pyrroline-5-carboxylate + NADH + 2 H(+). It functions in the pathway amino-acid biosynthesis; L-proline biosynthesis; L-proline from L-glutamate 5-semialdehyde: step 1/1. Its function is as follows. Catalyzes the reduction of 1-pyrroline-5-carboxylate (PCA) to L-proline. The protein is Pyrroline-5-carboxylate reductase of Synechocystis sp. (strain ATCC 27184 / PCC 6803 / Kazusa).